Consider the following 658-residue polypeptide: Threonine--tRNA ligase (658 aa).

Residues 1–64 (MSCSISLSFP…GQSGQVEIIT (64 aa)) form the TGS domain. Residues 246–549 (DHRRLGREMD…LIENFAGHMP (304 aa)) form a catalytic region. Zn(2+)-binding residues include cysteine 343, histidine 394, and histidine 526.

Belongs to the class-II aminoacyl-tRNA synthetase family. As to quaternary structure, homodimer. It depends on Zn(2+) as a cofactor.

It is found in the cytoplasm. The enzyme catalyses tRNA(Thr) + L-threonine + ATP = L-threonyl-tRNA(Thr) + AMP + diphosphate + H(+). Its function is as follows. Catalyzes the attachment of threonine to tRNA(Thr) in a two-step reaction: L-threonine is first activated by ATP to form Thr-AMP and then transferred to the acceptor end of tRNA(Thr). Also edits incorrectly charged L-seryl-tRNA(Thr). This chain is Threonine--tRNA ligase, found in Bartonella tribocorum (strain CIP 105476 / IBS 506).